Here is a 391-residue protein sequence, read N- to C-terminus: MAKSKFERTKPHVNIGTIGHVDHGKTSLTAAITKYFGEFKAYDQIDAAPEERARGITISTAHVEYETDQRHYAHVDCPGHADYVKNMITGAAQMDGAILVVSAADGPMPQTREHILLARQVGVPAIVVFLNKVDQVDDAELLELVELEVRELLSKYDFPGDDIPIVKGSALAALEDSDKSIGEDAVRLLMSEVDRYIPTPERPVDQSFLMPIEDVFSISGRGTVVTGRVERGVVKVGEEIEIVGIRPTSKTTVTGVEMFRKLLDQGQAGDNIGALLRGIDREGIERGQVLAKPGSVTPHTKFKAEAYILTKDEGGRHTPFFTNYRPQFYFRTTDVTGIVTLPEGTEMVMPGDNVAMDVSLIVPIAMEEKLRFAIREGGRTVGAGIVSKIIE.

The region spanning 10-201 (KPHVNIGTIG…EVDRYIPTPE (192 aa)) is the tr-type G domain. Residues 19–26 (GHVDHGKT) are G1. Position 19–26 (19–26 (GHVDHGKT)) interacts with GTP. Position 26 (T26) interacts with Mg(2+). The G2 stretch occupies residues 55–59 (GITIS). The segment at 76–79 (DCPG) is G3. GTP contacts are provided by residues 76 to 80 (DCPGH) and 131 to 134 (NKVD). The interval 131 to 134 (NKVD) is G4. Positions 169 to 171 (SAL) are G5.

Belongs to the TRAFAC class translation factor GTPase superfamily. Classic translation factor GTPase family. EF-Tu/EF-1A subfamily. In terms of assembly, monomer.

The protein resides in the cytoplasm. It carries out the reaction GTP + H2O = GDP + phosphate + H(+). GTP hydrolase that promotes the GTP-dependent binding of aminoacyl-tRNA to the A-site of ribosomes during protein biosynthesis. The chain is Elongation factor Tu 2 from Bartonella bacilliformis (strain ATCC 35685 / KC583 / Herrer 020/F12,63).